A 478-amino-acid chain; its full sequence is Cytochrome c-552 (478 aa).

An N-terminal signal peptide occupies residues 1 to 26; it reads MARKTLRARRFFSLIFPFFFITSVYA. His94 is a binding site for heme c. Residues Cys122, Cys125, and Lys126 each contribute to the heme site. The heme c site is built by Cys160, Cys163, His164, Cys209, Cys212, and His213. 4 residues coordinate Ca(2+): Glu215, Tyr216, Lys261, and Gln263. Tyr216 lines the substrate pocket. His264 provides a ligand contact to substrate. 9 residues coordinate heme c: His275, Cys282, Cys285, His286, His301, Cys314, Cys317, His318, and His393.

The protein belongs to the cytochrome c-552 family. The cofactor is Ca(2+). Heme c serves as cofactor.

The protein localises to the periplasm. The catalysed reaction is 6 Fe(III)-[cytochrome c] + NH4(+) + 2 H2O = 6 Fe(II)-[cytochrome c] + nitrite + 8 H(+). It functions in the pathway nitrogen metabolism; nitrate reduction (assimilation). Functionally, catalyzes the reduction of nitrite to ammonia, consuming six electrons in the process. The protein is Cytochrome c-552 of Salmonella paratyphi A (strain ATCC 9150 / SARB42).